Consider the following 172-residue polypeptide: Large ribosomal subunit protein uL10 (172 aa).

This sequence belongs to the universal ribosomal protein uL10 family. As to quaternary structure, part of the ribosomal stalk of the 50S ribosomal subunit. The N-terminus interacts with L11 and the large rRNA to form the base of the stalk. The C-terminus forms an elongated spine to which L12 dimers bind in a sequential fashion forming a multimeric L10(L12)X complex.

Functionally, forms part of the ribosomal stalk, playing a central role in the interaction of the ribosome with GTP-bound translation factors. This chain is Large ribosomal subunit protein uL10, found in Chelativorans sp. (strain BNC1).